Here is a 318-residue protein sequence, read N- to C-terminus: Nucleotide-binding protein Jann_0539 (318 aa).

17–24 (GPSGAGRS) provides a ligand contact to ATP. 64–67 (DPRT) contacts GTP. Residues 278-318 (GWQVSKRHRDVDKDASENSDRDRGASARTAASTDDGEAEQP) are disordered. Basic and acidic residues predominate over residues 286–302 (RDVDKDASENSDRDRGA).

The protein belongs to the RapZ-like family.

Functionally, displays ATPase and GTPase activities. The polypeptide is Nucleotide-binding protein Jann_0539 (Jannaschia sp. (strain CCS1)).